Here is a 202-residue protein sequence, read N- to C-terminus: Small ribosomal subunit protein uS4c (202 aa).

Positions 90-158 (MRSDNVIFRL…ISKNIELYQK (69 aa)) constitute an S4 RNA-binding domain.

The protein belongs to the universal ribosomal protein uS4 family. As to quaternary structure, part of the 30S ribosomal subunit. Contacts protein S5. The interaction surface between S4 and S5 is involved in control of translational fidelity.

It localises to the plastid. The protein localises to the chloroplast. In terms of biological role, one of the primary rRNA binding proteins, it binds directly to 16S rRNA where it nucleates assembly of the body of the 30S subunit. Its function is as follows. With S5 and S12 plays an important role in translational accuracy. This Exsertotheca crispa (Moss) protein is Small ribosomal subunit protein uS4c (rps4).